An 80-amino-acid chain; its full sequence is Conotoxin SmIVA (80 aa).

Positions 1–21 are cleaved as a signal peptide; that stretch reads MGMRMMFTVFLLVVLATTVVS. A propeptide spanning residues 22 to 38 is cleaved from the precursor; the sequence is IPSDRASDGRNAAVNER. At glutamine 39 the chain carries Pyrrolidone carboxylic acid. Serine 45 carries O-linked (HexNAc...) serine glycosylation. Proline 55, proline 60, proline 70, and proline 72 each carry 4-hydroxyproline. A Serine amide modification is found at serine 75. Positions 76–80 are excised as a propeptide; the sequence is GRRND.

This sequence belongs to the conotoxin A superfamily. In terms of processing, contains 3 disulfide bonds. As to expression, expressed by the venom duct.

The protein resides in the secreted. Functionally, neurotoxin with probable activity on sodium channel. Induces intense repetitive firing of the frog neuromuscular junction, leading to a tetanic contracture in muscle fiber (spastic paralysis). In vivo, shows the same effect as the whole venom when injected on fish prey. This is Conotoxin SmIVA from Conus stercusmuscarum (Fly-specked cone).